Reading from the N-terminus, the 331-residue chain is N-arachidonyl glycine receptor (331 aa).

The Extracellular segment spans residues 1–26 (MITLNNQDQPVPFNSSHPDEYKIAAL). N14 is a glycosylation site (N-linked (GlcNAc...) asparagine). A helical transmembrane segment spans residues 27-47 (VFYSCIFIIGLFVNITALWVF). The Cytoplasmic segment spans residues 48–56 (SCTTKKRTT). A helical membrane pass occupies residues 57-77 (VTIYMMNVALVDLIFIMTLPF). Residues 78 to 95 (RMFYYAKDEWPFGEYFCQ) are Extracellular-facing. C94 and C172 are oxidised to a cystine. Residues 96-116 (ILGALTVFYPSIALWLLAFIS) traverse the membrane as a helical segment. Residues 117–138 (ADRYMAIVQPKYAKELKNTCKA) lie on the Cytoplasmic side of the membrane. A helical transmembrane segment spans residues 139–159 (VLACVGVWIMTLTTTTPLLLL). The Extracellular portion of the chain corresponds to 160–191 (YKDPDKDSTPATCLKISDIIYLKAVNVLNLTR). The helical transmembrane segment at 192-212 (LTFFFLIPLFIMIGCYLVIIH) threads the bilayer. At 213–232 (NLLHGRTSKLKPKVKEKSIR) the chain is on the cytoplasmic side. A helical membrane pass occupies residues 233–253 (IIITLLVQVLVCFMPFHICFA). At 254-268 (FLMLGTGENSYNPWG) the chain is on the extracellular side. The helical transmembrane segment at 269–289 (AFTTFLMNLSTCLDVILYYIV) threads the bilayer. The Cytoplasmic portion of the chain corresponds to 290 to 331 (SKQFQARVISVMLYRNYLRSMRRKSFRSGSLRSLSNINSEML). Residue S322 is modified to Phosphoserine.

It belongs to the G-protein coupled receptor 1 family. In terms of tissue distribution, expressed in midpiece of spermatozoon (at protein level). Most abundant in testis and spleen. Highly expressed in CD4 and CD8-positive T-cells as well as CD19-positive B-cells.

It is found in the cell membrane. The protein localises to the cytoplasmic vesicle membrane. Functionally, g protein-coupled receptor (GPCR) that plays a role in diverse physiological processes particularly within the immune and nervous systems. Becomes active when triggered by various endogenous ligands including endocannabinoid N-arachidonyl glycine (NAGly), delta-9-tetrahydrocannabinol or resolvin D2/RvD2 derived from the omega-3 fatty acid docosahexaenoic acid (DHA). Upon RvD2 binding, facilitates the resolution of inflammation, aiding in tissue repair and homeostasis. Mechanistically, RvD2 ligation initiates Galphas protein coupling, activation of cAMP-PKA signaling pathway and phosphorylation of STAT3, leading to RvD2-stimulated macrophage phagocytosis. Mediates NAGly-induced process of reorganization of actin filaments and induction of acrosomal exocytosis. Activation by N-arachidonoyl glycine (NAGly) can also induce apoptosis in macrophages. Plays a role in homeostasis of CD8+ subsets of intraepithelial lymphocytes (IELs) (CD8alphaalpha and CD8alphabeta IELs) in small intestine by supporting preferential migration of CD8alphaalpha T-cells to intraepithelial compartment over lamina propria compartment, and by mediating their reconstitution into small intestine after bone marrow transplant. Also participates in hypotensive responses, mediating reduction in intraocular and blood pressure. This chain is N-arachidonyl glycine receptor (GPR18), found in Homo sapiens (Human).